The chain runs to 598 residues: Nuclear receptor subfamily 4 group A member 2 (598 aa).

A disordered region spans residues 1–22 (MPCVQAQYGSSPQGASPASQSY). The segment covering 8-22 (YGSSPQGASPASQSY) has biased composition (low complexity). The nuclear receptor DNA-binding region spans 260–335 (EGLCAVCGDN…VGMVKEVVRT (76 aa)). 2 consecutive NR C4-type zinc fingers follow at residues 263 to 283 (CAVC…CEGC) and 299 to 318 (CLAN…CQYC). The Bipartite nuclear localization signal (NLS1) signature appears at 287-314 (FKRTVQKNAKYVCLANKNCPVDKRRRNR). A disordered region spans residues 337 to 361 (SLKGRRGRLPSKPKSPQEPSPPSPP). The short motif at 338 to 350 (LKGRRGRLPSKPK) is the Nuclear localization signal (NLS1) element. The segment covering 352 to 361 (PQEPSPPSPP) has biased composition (pro residues). An NR LBD domain is found at 360 to 595 (PPVSLISALV…AIIDKLFLDT (236 aa)). Positions 443-452 (FLELFVLRLA) match the nuclear export sequence (NES1) motif. The nuclear export sequence (NES2) motif lies at 568–577 (QGLQRIFYLK).

The protein belongs to the nuclear hormone receptor family. NR4 subfamily. In terms of assembly, interacts with SFPQ, NCOR2, SIN3A and HADC1. The interaction with NCOR2 increases in the absence of PITX3. Interacts with PER2.

The protein resides in the cytoplasm. The protein localises to the nucleus. Its function is as follows. Transcriptional regulator which is important for the differentiation and maintenance of meso-diencephalic dopaminergic (mdDA) neurons during development. It is crucial for expression of a set of genes such as SLC6A3, SLC18A2, TH and DRD2 which are essential for development of mdDA neurons. The chain is Nuclear receptor subfamily 4 group A member 2 (NR4A2) from Bos taurus (Bovine).